The primary structure comprises 128 residues: NADH-quinone oxidoreductase subunit A (128 aa).

3 helical membrane passes run isoleucine 5–alanine 25, leucine 72–valine 92, and phenylalanine 100–tryptophan 120.

Belongs to the complex I subunit 3 family. NDH-1 is composed of 14 different subunits. Subunits NuoA, H, J, K, L, M, N constitute the membrane sector of the complex.

It is found in the cell membrane. It catalyses the reaction a quinone + NADH + 5 H(+)(in) = a quinol + NAD(+) + 4 H(+)(out). Functionally, NDH-1 shuttles electrons from NADH, via FMN and iron-sulfur (Fe-S) centers, to quinones in the respiratory chain. The immediate electron acceptor for the enzyme in this species is believed to be a menaquinone. Couples the redox reaction to proton translocation (for every two electrons transferred, four hydrogen ions are translocated across the cytoplasmic membrane), and thus conserves the redox energy in a proton gradient. The sequence is that of NADH-quinone oxidoreductase subunit A from Mycobacterium bovis (strain ATCC BAA-935 / AF2122/97).